The primary structure comprises 301 residues: Very-long-chain aldehyde decarbonylase GL1-10 (301 aa).

3 helical membrane-spanning segments follow: residues valine 36 to valine 56, phenylalanine 94 to isoleucine 114, and serine 187 to leucine 207. The 135-residue stretch at leucine 131 to threonine 265 folds into the Fatty acid hydroxylase domain.

The protein belongs to the sterol desaturase family. Homodimer. As to expression, expressed ubiquitously.

It is found in the endoplasmic reticulum membrane. The catalysed reaction is a long-chain fatty aldehyde + 2 NADPH + O2 + H(+) = a long-chain alkane + formate + 2 NADP(+) + H2O. Functionally, aldehyde decarbonylase involved in the conversion of aldehydes to alkanes. Core component of a very-long-chain alkane synthesis complex. This is Very-long-chain aldehyde decarbonylase GL1-10 from Oryza sativa subsp. japonica (Rice).